The sequence spans 312 residues: MNVTFLGTSSGVPSLTRNVSSLALKLSQSSEVWLFDCGEGTQHQIMKSNIKSSQIKKIFITHMHGDHIYGLPGLLATLGLSGNSKGIEIYGPSELRSYINSALKSSFCKLSYPLHFVEVENYASKNKILFENNKIKVNCACLKHKIPAYGYRVSEKDKPGIFDIKKAQSLKIAPGPIYSELQQGKKVVLADGRTFDGKEFCGPPRVGESFVYCTDTVFSQSAVSLSKNANLLVHESTFSEEDENMAYEKLHSTTIMAAKTALLSNTKKLIITHLSPRYTNKNAITPSDLLKEAQKVFPNTQLAKDFLTTEIK.

Residues His-62, His-64, Asp-66, His-67, His-144, Asp-215, and His-273 each coordinate Zn(2+). Asp-66 (proton acceptor) is an active-site residue.

It belongs to the RNase Z family. Homodimer. The cofactor is Zn(2+).

It carries out the reaction Endonucleolytic cleavage of RNA, removing extra 3' nucleotides from tRNA precursor, generating 3' termini of tRNAs. A 3'-hydroxy group is left at the tRNA terminus and a 5'-phosphoryl group is left at the trailer molecule.. Functionally, zinc phosphodiesterase, which displays some tRNA 3'-processing endonuclease activity. Probably involved in tRNA maturation, by removing a 3'-trailer from precursor tRNA. In Prochlorococcus marinus (strain MIT 9215), this protein is Ribonuclease Z.